The chain runs to 331 residues: Anthranilate phosphoribosyltransferase (331 aa).

5-phospho-alpha-D-ribose 1-diphosphate is bound by residues G78, 81 to 82 (GD), T86, 88 to 91 (NVST), 106 to 114 (KHGNYSVSS), and S118. An anthranilate-binding site is contributed by G78. S90 lines the Mg(2+) pocket. N109 is a binding site for anthranilate. Residue R164 participates in anthranilate binding. Positions 222 and 223 each coordinate Mg(2+).

The protein belongs to the anthranilate phosphoribosyltransferase family. In terms of assembly, homodimer. Mg(2+) is required as a cofactor.

The enzyme catalyses N-(5-phospho-beta-D-ribosyl)anthranilate + diphosphate = 5-phospho-alpha-D-ribose 1-diphosphate + anthranilate. It functions in the pathway amino-acid biosynthesis; L-tryptophan biosynthesis; L-tryptophan from chorismate: step 2/5. Its function is as follows. Catalyzes the transfer of the phosphoribosyl group of 5-phosphorylribose-1-pyrophosphate (PRPP) to anthranilate to yield N-(5'-phosphoribosyl)-anthranilate (PRA). This is Anthranilate phosphoribosyltransferase from Haloferax volcanii (strain ATCC 29605 / DSM 3757 / JCM 8879 / NBRC 14742 / NCIMB 2012 / VKM B-1768 / DS2) (Halobacterium volcanii).